The sequence spans 767 residues: 5-methyltetrahydropteroyltriglutamate--homocysteine methyltransferase (767 aa).

Position 126 (lysine 126) interacts with 5-methyltetrahydropteroyltri-L-glutamate. L-homocysteine-binding positions include isoleucine 445–serine 447 and glutamate 498. Residues isoleucine 445–serine 447 and glutamate 498 contribute to the L-methionine site. 5-methyltetrahydropteroyltri-L-glutamate-binding positions include arginine 529–cysteine 530 and tryptophan 575. Residue aspartate 613 coordinates L-homocysteine. Residue aspartate 613 coordinates L-methionine. Position 619 (glutamate 619) interacts with 5-methyltetrahydropteroyltri-L-glutamate. Positions 655, 657, and 679 each coordinate Zn(2+). Histidine 708 serves as the catalytic Proton donor. Residue cysteine 740 participates in Zn(2+) binding.

The protein belongs to the vitamin-B12 independent methionine synthase family. Zn(2+) is required as a cofactor.

It catalyses the reaction 5-methyltetrahydropteroyltri-L-glutamate + L-homocysteine = tetrahydropteroyltri-L-glutamate + L-methionine. It participates in amino-acid biosynthesis; L-methionine biosynthesis via de novo pathway; L-methionine from L-homocysteine (MetE route): step 1/1. In terms of biological role, catalyzes the transfer of a methyl group from 5-methyltetrahydrofolate to homocysteine resulting in methionine formation. This Psychromonas ingrahamii (strain DSM 17664 / CCUG 51855 / 37) protein is 5-methyltetrahydropteroyltriglutamate--homocysteine methyltransferase.